Here is a 470-residue protein sequence, read N- to C-terminus: Neuraminidase (470 aa).

Residues 1 to 6 (MNPNQK) lie on the Intravirion side of the membrane. The helical transmembrane segment at 7–27 (IITIGSICMTIGIISLILQIG) threads the bilayer. The interval 11–33 (GSICMTIGIISLILQIGNIISIW) is involved in apical transport and lipid raft association. The Virion surface portion of the chain corresponds to 28-470 (NIISIWVSHS…GAELPFTIDK (443 aa)). Positions 36-90 (HSIQTGSQNHTGICNQRIITYENSTWVNQTYVNINNTNVVAGKDTTSVTLAGNSS) are hypervariable stalk region. 5 N-linked (GlcNAc...) asparagine; by host glycosylation sites follow: N44, N58, N63, N70, and N88. The head of neuraminidase stretch occupies residues 91–470 (LCPIRGWAIY…GAELPFTIDK (380 aa)). Intrachain disulfides connect C92-C417, C124-C129, C184-C231, C233-C238, C279-C292, C281-C290, C318-C335, and C421-C447. R118 lines the substrate pocket. N146 is a glycosylation site (N-linked (GlcNAc...) asparagine; by host). The active-site Proton donor/acceptor is the D151. R152 serves as a coordination point for substrate. N235 carries N-linked (GlcNAc...) asparagine; by host glycosylation. 277-278 (EE) lines the substrate pocket. R293 is a substrate binding site. Ca(2+)-binding residues include D294, G298, and D324. N-linked (GlcNAc...) asparagine; by host glycosylation is present at N365. R368 is a binding site for substrate. The active-site Nucleophile is Y402. An N-linked (GlcNAc...) asparagine; by host glycan is attached at N455.

Belongs to the glycosyl hydrolase 34 family. In terms of assembly, homotetramer. It depends on Ca(2+) as a cofactor. Post-translationally, N-glycosylated.

It is found in the virion membrane. It localises to the host apical cell membrane. The catalysed reaction is Hydrolysis of alpha-(2-&gt;3)-, alpha-(2-&gt;6)-, alpha-(2-&gt;8)- glycosidic linkages of terminal sialic acid residues in oligosaccharides, glycoproteins, glycolipids, colominic acid and synthetic substrates.. With respect to regulation, inhibited by the neuraminidase inhibitors zanamivir (Relenza) and oseltamivir (Tamiflu). These drugs interfere with the release of progeny virus from infected cells and are effective against all influenza strains. Resistance to neuraminidase inhibitors is quite rare. Its function is as follows. Catalyzes the removal of terminal sialic acid residues from viral and cellular glycoconjugates. Cleaves off the terminal sialic acids on the glycosylated HA during virus budding to facilitate virus release. Additionally helps virus spread through the circulation by further removing sialic acids from the cell surface. These cleavages prevent self-aggregation and ensure the efficient spread of the progeny virus from cell to cell. Otherwise, infection would be limited to one round of replication. Described as a receptor-destroying enzyme because it cleaves a terminal sialic acid from the cellular receptors. May facilitate viral invasion of the upper airways by cleaving the sialic acid moieties on the mucin of the airway epithelial cells. Likely to plays a role in the budding process through its association with lipid rafts during intracellular transport. May additionally display a raft-association independent effect on budding. Plays a role in the determination of host range restriction on replication and virulence. Sialidase activity in late endosome/lysosome traffic seems to enhance virus replication. In Influenza A virus (strain A/Chile/1/1983 H1N1), this protein is Neuraminidase.